Reading from the N-terminus, the 84-residue chain is Large ribosomal subunit protein bL27 (84 aa).

The disordered stretch occupies residues 1 to 21; it reads MAHKKGGGSTKNGRDSNPKYL.

This sequence belongs to the bacterial ribosomal protein bL27 family.

The polypeptide is Large ribosomal subunit protein bL27 (Chlorobaculum parvum (strain DSM 263 / NCIMB 8327) (Chlorobium vibrioforme subsp. thiosulfatophilum)).